The following is a 464-amino-acid chain: UDP-glycosyltransferase 76C1 (464 aa).

UDP-alpha-D-glucose contacts are provided by residues serine 279, 338–340 (APQ), 355–363 (HNGWNSTLE), and 377–380 (KWDQ).

Belongs to the UDP-glycosyltransferase family.

Its activity is regulated as follows. Inhibited by olomoucine and 3-isobutyl-1-methylxanthine. Its function is as follows. Involved in the N-glucosylation of cytokinins. Catalyzes the formation of both the 7-N and the 9-N-glucosides. In Arabidopsis thaliana (Mouse-ear cress), this protein is UDP-glycosyltransferase 76C1 (UGT76C1).